Here is a 346-residue protein sequence, read N- to C-terminus: LRP2-binding protein (346 aa).

One copy of the TPR repeat lies at 58–91 (AMAYFLRGQLYFEEGWYEEALAQFEEIQEKDHQA). 6 Sel1-like repeats span residues 92–124 (IYQL…DSSC), 132–167 (FAAA…DNGN), 172–205 (VKAQ…GNGS), 206–241 (LESQ…ERGN), 242–276 (VYAQ…EVHD), and 296–331 (AMAA…RLNP).

In terms of assembly, interacts with LRP2.

The protein resides in the cytoplasm. Functionally, may act as an adapter that regulates LRP2 function. This is LRP2-binding protein (Lrp2bp) from Mus musculus (Mouse).